Here is a 288-residue protein sequence, read N- to C-terminus: 33 kDa chaperonin (288 aa).

2 cysteine pairs are disulfide-bonded: Cys235–Cys237 and Cys268–Cys271.

This sequence belongs to the HSP33 family. Post-translationally, under oxidizing conditions two disulfide bonds are formed involving the reactive cysteines. Under reducing conditions zinc is bound to the reactive cysteines and the protein is inactive.

It is found in the cytoplasm. Redox regulated molecular chaperone. Protects both thermally unfolding and oxidatively damaged proteins from irreversible aggregation. Plays an important role in the bacterial defense system toward oxidative stress. The protein is 33 kDa chaperonin of Streptococcus thermophilus (strain ATCC BAA-250 / LMG 18311).